We begin with the raw amino-acid sequence, 355 residues long: Guanine nucleotide-binding protein G(o) subunit alpha (355 aa).

Residues 1–17 show a composition bias toward low complexity; that stretch reads MGCASSAEERAAPSAQQ. The tract at residues 1-24 is disordered; it reads MGCASSAEERAAPSAQQADREKLK. Gly2 carries N-myristoyl glycine lipidation. Cys3 carries S-palmitoyl cysteine lipidation. The G-alpha domain maps to 32 to 355; sequence KDIKLLLLGA…ANNLRGCGLY (324 aa). The interval 35–48 is G1 motif; the sequence is KLLLLGAGESGKST. GTP contacts are provided by residues 40-47, 176-182, 201-205, 201-206, 271-274, and Ala327; these read GAGESGKS, LRTRVKT, DVGRG, DVGRGQ, and NKKD. The Mg(2+) site is built by Ser47 and Thr182. Residues 174–182 are G2 motif; it reads DILRTRVKT. Residues 197 to 206 are G3 motif; it reads FKLFDVGRGQ. Residues 267–274 form a G4 motif region; sequence ILFLNKKD. The interval 326–330 is G5 motif; that stretch reads TATDT.

This sequence belongs to the G-alpha family. G(i/o/t/z) subfamily. In terms of assembly, g proteins are composed of 3 units; alpha, beta and gamma. The alpha chain contains the guanine nucleotide binding site.

Functionally, guanine nucleotide-binding proteins (G proteins) are involved as modulators or transducers in various transmembrane signaling systems. The G(o) protein function is not clear. In Manduca sexta (Tobacco hawkmoth), this protein is Guanine nucleotide-binding protein G(o) subunit alpha.